A 119-amino-acid chain; its full sequence is Flagellar transcriptional regulator FlhD (119 aa).

This sequence belongs to the FlhD family. In terms of assembly, homodimer; disulfide-linked. Forms a heterohexamer composed of two FlhC and four FlhD subunits. Each FlhC binds a FlhD dimer, forming a heterotrimer, and a hexamer assembles by dimerization of two heterotrimers.

Its subcellular location is the cytoplasm. Its function is as follows. Functions in complex with FlhC as a master transcriptional regulator that regulates transcription of several flagellar and non-flagellar operons by binding to their promoter region. Activates expression of class 2 flagellar genes, including fliA, which is a flagellum-specific sigma factor that turns on the class 3 genes. Also regulates genes whose products function in a variety of physiological pathways. This is Flagellar transcriptional regulator FlhD from Shigella boydii serotype 4 (strain Sb227).